The sequence spans 443 residues: ATP-dependent protease ATPase subunit HslU (443 aa).

Residues Ile-18, 60–65, Asp-256, Glu-321, and Arg-393 each bind ATP; that span reads GVGKTE.

This sequence belongs to the ClpX chaperone family. HslU subfamily. A double ring-shaped homohexamer of HslV is capped on each side by a ring-shaped HslU homohexamer. The assembly of the HslU/HslV complex is dependent on binding of ATP.

The protein localises to the cytoplasm. In terms of biological role, ATPase subunit of a proteasome-like degradation complex; this subunit has chaperone activity. The binding of ATP and its subsequent hydrolysis by HslU are essential for unfolding of protein substrates subsequently hydrolyzed by HslV. HslU recognizes the N-terminal part of its protein substrates and unfolds these before they are guided to HslV for hydrolysis. The sequence is that of ATP-dependent protease ATPase subunit HslU from Escherichia coli O157:H7 (strain EC4115 / EHEC).